The sequence spans 184 residues: Large ribosomal subunit protein uL6 (184 aa).

This sequence belongs to the universal ribosomal protein uL6 family. As to quaternary structure, part of the 50S ribosomal subunit.

This protein binds to the 23S rRNA, and is important in its secondary structure. It is located near the subunit interface in the base of the L7/L12 stalk, and near the tRNA binding site of the peptidyltransferase center. The sequence is that of Large ribosomal subunit protein uL6 from Thermotoga maritima (strain ATCC 43589 / DSM 3109 / JCM 10099 / NBRC 100826 / MSB8).